Here is a 473-residue protein sequence, read N- to C-terminus: Serine carboxypeptidase-like 25 (473 aa).

The N-terminal stretch at 1–22 (MAMAKLAIFTTLMAILVMTSQG) is a signal peptide. Asn-46 and Asn-143 each carry an N-linked (GlcNAc...) asparagine glycan. 3 disulfides stabilise this stretch: Cys-92-Cys-358, Cys-252-Cys-263, and Cys-288-Cys-326. The active site involves Ser-185. Asn-289, Asn-299, Asn-347, and Asn-367 each carry an N-linked (GlcNAc...) asparagine glycan. Active-site residues include Asp-395 and His-447.

Belongs to the peptidase S10 family. As to expression, ubiquitous.

Its subcellular location is the secreted. Functionally, probable carboxypeptidase. This Arabidopsis thaliana (Mouse-ear cress) protein is Serine carboxypeptidase-like 25 (SCPL25).